The sequence spans 1408 residues: DNA-directed RNA polymerase subunit beta' (1408 aa).

Zn(2+)-binding residues include Cys70, Cys72, Cys85, and Cys88. The Mg(2+) site is built by Asp458, Asp460, and Asp462. 4 residues coordinate Zn(2+): Cys813, Cys887, Cys894, and Cys897. Residues 1387-1408 (AELEAATATAPADAGGDSPATE) form a disordered region. Over residues 1389-1408 (LEAATATAPADAGGDSPATE) the composition is skewed to low complexity.

It belongs to the RNA polymerase beta' chain family. The RNAP catalytic core consists of 2 alpha, 1 beta, 1 beta' and 1 omega subunit. When a sigma factor is associated with the core the holoenzyme is formed, which can initiate transcription. Mg(2+) is required as a cofactor. It depends on Zn(2+) as a cofactor.

It catalyses the reaction RNA(n) + a ribonucleoside 5'-triphosphate = RNA(n+1) + diphosphate. Its function is as follows. DNA-dependent RNA polymerase catalyzes the transcription of DNA into RNA using the four ribonucleoside triphosphates as substrates. The chain is DNA-directed RNA polymerase subunit beta' from Polaromonas sp. (strain JS666 / ATCC BAA-500).